Consider the following 243-residue polypeptide: Ubiquinone biosynthesis O-methyltransferase (243 aa).

The S-adenosyl-L-methionine site is built by Arg44, Gly64, Asp85, and Met129.

Belongs to the methyltransferase superfamily. UbiG/COQ3 family.

It carries out the reaction a 3-demethylubiquinol + S-adenosyl-L-methionine = a ubiquinol + S-adenosyl-L-homocysteine + H(+). The catalysed reaction is a 3-(all-trans-polyprenyl)benzene-1,2-diol + S-adenosyl-L-methionine = a 2-methoxy-6-(all-trans-polyprenyl)phenol + S-adenosyl-L-homocysteine + H(+). Its pathway is cofactor biosynthesis; ubiquinone biosynthesis. In terms of biological role, O-methyltransferase that catalyzes the 2 O-methylation steps in the ubiquinone biosynthetic pathway. The protein is Ubiquinone biosynthesis O-methyltransferase of Cronobacter sakazakii (strain ATCC BAA-894) (Enterobacter sakazakii).